The following is a 523-amino-acid chain: Signal peptide peptidase-like 3 (523 aa).

The signal sequence occupies residues 1–35 (MAFPAPSSSSPRRRGRGLAYLLVSVLLLASRVPGA). Over 36–207 (AGADSEFEDG…EKPSFDGAIP (172 aa)) the chain is Lumenal. Residues 110–182 (SAPLASSIAV…SQSAGRKILS (73 aa)) form the PA domain. Asn159 carries an N-linked (GlcNAc...) asparagine glycan. Residues 208–228 (FLWLMAVGSVACASVWSFVVV) traverse the membrane as a helical segment. The Cytoplasmic portion of the chain corresponds to 229–254 (GDEDKNAPTLGGEEAADSEIVELQTK). The chain crosses the membrane as a helical span at residues 255–272 (TALVFIVTASLVLLFLFF). The Lumenal segment spans residues 273-275 (FKS). A helical membrane pass occupies residues 276–298 (TWSAWLLVVLFCLSGLQGLHYVA). The Cytoplasmic segment spans residues 299–321 (STLIVRTCDRCREAKVALPVLGN). A helical membrane pass occupies residues 322-342 (VTVVTLVILPLALIFVVVWAV). Over 343 to 347 (HQNSP) the chain is Lumenal. Residues 348–368 (FAWVGQDLMGICMMILVLQVV) form a helical membrane-spanning segment. The Cytoplasmic portion of the chain corresponds to 369 to 377 (HLPNIKVAT). Residues 378-398 (ALLVSAFMYDIFWVFISPFIF) traverse the membrane as a helical segment. Residue Asp387 is part of the active site. At 399 to 430 (KKSVMITVARGSDEGPSLPMVLKMPKEFDTWN) the chain is on the lumenal side. A helical membrane pass occupies residues 431–451 (GYDMIGFGDILFPGLLVAFSF). Asp439 is a catalytic residue. Over 452–465 (RYDRANGKDLTDGY) the chain is Cytoplasmic. The chain crosses the membrane as a helical span at residues 466–486 (FLCLMIGYAFGLSCTYVGLYL). The Lumenal segment spans residues 487-489 (MKS). The chain crosses the membrane as a helical span at residues 490 to 510 (GQPALLYLVPSTLGTIVTLGA). Positions 492–494 (PAL) match the PAL motif. At 511 to 523 (KRGELSQLWNAKV) the chain is on the cytoplasmic side.

Belongs to the peptidase A22B family. In terms of processing, glycosylated.

It is found in the endosome membrane. Intramembrane-cleaving aspartic protease (I-CLiP) that cleaves type II membrane signal peptides in the hydrophobic plane of the membrane. This is Signal peptide peptidase-like 3 (SPPL3) from Oryza sativa subsp. japonica (Rice).